Reading from the N-terminus, the 90-residue chain is UPF0213 protein lin0209 (90 aa).

In terms of domain architecture, GIY-YIG spans 5 to 80 (NEHFFYVLKC…KKLSRKNKDS (76 aa)).

Belongs to the UPF0213 family.

This chain is UPF0213 protein lin0209, found in Listeria innocua serovar 6a (strain ATCC BAA-680 / CLIP 11262).